Reading from the N-terminus, the 181-residue chain is Sodium/potassium-transporting ATPase subunit beta-1-interacting protein 3 (181 aa).

The next 4 membrane-spanning stretches (helical) occupy residues 2 to 22, 35 to 55, 62 to 82, and 152 to 172; these read GCCTGRCSLVCLCALQLLSAL, APILGNFLHIIVVILGLFGTI, IMVYTVWTALWVTWNVFIICF, and VQILLSLVGFVYACYVISISM.

Belongs to the NKAIN family. Interacts with ATP1B1. In terms of tissue distribution, detected in the brain only and specifically in neurons. Expressed in multiple regions such as cerebral cortex, thalamus, hippocampus, olfactory bulb and brainstem as well as in cerebellum with low expression in granular cell layer.

The protein resides in the cell membrane. In Mus musculus (Mouse), this protein is Sodium/potassium-transporting ATPase subunit beta-1-interacting protein 3 (Nkain3).